The chain runs to 452 residues: MKVISNFQNKKILILGLAKSGEAAAKLLTKLGALVTVNDSKPFDQNPAAQALLEEGIKVICGSHPVELLDENFEYMVKNPGIPYDNPMVKRALAKEIPILTEVELAYFVSEAPIIGITGSNGKTTTTTMIADVLNAGGQSALLSGNIGYPASKVVQKAIAGDTLVMELSSFQLVGVNAFRPHIAVITNLMPTHLDYHGSFEDYVAAKWMIQAQMTESDYLILNANQEISATLAKTTKATVIPFSTQKVVDGAYLKDGILYFKEQAIIAATDLGVPGSHNIENALATIAVAKLSGIADDIIAQCLSHFGGVKHRLQRVGQIKDITFYNDSKSTNILATQKALSGFDNSRLILIAGGLDRGNEFDDLVPDLLGLKQMIILGESAERMKRAANKAEVSYLEARNVAEATELAFKLAQTGDTILLSPANASWDMYPNFEVRGDEFLATFDCLRGDA.

119-125 contacts ATP; that stretch reads GSNGKTT.

This sequence belongs to the MurCDEF family.

It is found in the cytoplasm. It carries out the reaction UDP-N-acetyl-alpha-D-muramoyl-L-alanine + D-glutamate + ATP = UDP-N-acetyl-alpha-D-muramoyl-L-alanyl-D-glutamate + ADP + phosphate + H(+). It functions in the pathway cell wall biogenesis; peptidoglycan biosynthesis. Functionally, cell wall formation. Catalyzes the addition of glutamate to the nucleotide precursor UDP-N-acetylmuramoyl-L-alanine (UMA). The sequence is that of UDP-N-acetylmuramoylalanine--D-glutamate ligase (murD) from Streptococcus pyogenes serotype M1.